Consider the following 434-residue polypeptide: 3-phosphoshikimate 1-carboxyvinyltransferase (434 aa).

3 residues coordinate 3-phosphoshikimate: Lys-22, Ser-23, and Arg-27. Residue Lys-22 participates in phosphoenolpyruvate binding. Positions 93 and 121 each coordinate phosphoenolpyruvate. 3-phosphoshikimate is bound by residues Ser-168, Ser-169, Gln-170, Ser-199, Asp-320, and Lys-347. Gln-170 lines the phosphoenolpyruvate pocket. Catalysis depends on Asp-320, which acts as the Proton acceptor. The phosphoenolpyruvate site is built by Arg-351, Arg-394, and Lys-419.

This sequence belongs to the EPSP synthase family. As to quaternary structure, monomer.

Its subcellular location is the cytoplasm. The catalysed reaction is 3-phosphoshikimate + phosphoenolpyruvate = 5-O-(1-carboxyvinyl)-3-phosphoshikimate + phosphate. The protein operates within metabolic intermediate biosynthesis; chorismate biosynthesis; chorismate from D-erythrose 4-phosphate and phosphoenolpyruvate: step 6/7. Functionally, catalyzes the transfer of the enolpyruvyl moiety of phosphoenolpyruvate (PEP) to the 5-hydroxyl of shikimate-3-phosphate (S3P) to produce enolpyruvyl shikimate-3-phosphate and inorganic phosphate. This is 3-phosphoshikimate 1-carboxyvinyltransferase from Paraburkholderia phymatum (strain DSM 17167 / CIP 108236 / LMG 21445 / STM815) (Burkholderia phymatum).